A 663-amino-acid polypeptide reads, in one-letter code: UvrABC system protein B (663 aa).

Residues 26-414 (DGLESGLAKQ…DNVAEQVVRP (389 aa)) form the Helicase ATP-binding domain. Residue 39–46 (GVTGSGKT) coordinates ATP. The Beta-hairpin signature appears at 92–115 (YYDYYQPEAYVPASDTFIEKDASI). The 167-residue stretch at 430-596 (QVDDLMSEIR…GINKSVEDIL (167 aa)) folds into the Helicase C-terminal domain. In terms of domain architecture, UVR spans 624–659 (AKEINALEKQMYAHAQNMEFELAAKIRDEYLLLKEQ).

It belongs to the UvrB family. Forms a heterotetramer with UvrA during the search for lesions. Interacts with UvrC in an incision complex.

It is found in the cytoplasm. In terms of biological role, the UvrABC repair system catalyzes the recognition and processing of DNA lesions. A damage recognition complex composed of 2 UvrA and 2 UvrB subunits scans DNA for abnormalities. Upon binding of the UvrA(2)B(2) complex to a putative damaged site, the DNA wraps around one UvrB monomer. DNA wrap is dependent on ATP binding by UvrB and probably causes local melting of the DNA helix, facilitating insertion of UvrB beta-hairpin between the DNA strands. Then UvrB probes one DNA strand for the presence of a lesion. If a lesion is found the UvrA subunits dissociate and the UvrB-DNA preincision complex is formed. This complex is subsequently bound by UvrC and the second UvrB is released. If no lesion is found, the DNA wraps around the other UvrB subunit that will check the other stand for damage. The sequence is that of UvrABC system protein B from Legionella pneumophila (strain Paris).